The chain runs to 233 residues: Ion-translocating oxidoreductase complex subunit E (233 aa).

5 helical membrane passes run 22-42 (LLGL…LGLG), 69-89 (IPIY…LINA), 93-113 (GLYQ…IVVG), 128-148 (ALDG…LGSI), and 182-202 (PMLL…LLAA).

Belongs to the NqrDE/RnfAE family. In terms of assembly, the complex is composed of six subunits: RnfA, RnfB, RnfC, RnfD, RnfE and RnfG.

The protein localises to the cell inner membrane. Part of a membrane-bound complex that couples electron transfer with translocation of ions across the membrane. The protein is Ion-translocating oxidoreductase complex subunit E of Erwinia tasmaniensis (strain DSM 17950 / CFBP 7177 / CIP 109463 / NCPPB 4357 / Et1/99).